The sequence spans 196 residues: uncharacterized protein (196 aa).

The first 27 residues, 1–27 (MSVLSRAVQLAFVALGLCLFFSNLVAA), serve as a signal peptide directing secretion.

The protein localises to the secreted. This is an uncharacterized protein from Arthroderma benhamiae (strain ATCC MYA-4681 / CBS 112371) (Trichophyton mentagrophytes).